We begin with the raw amino-acid sequence, 88 residues long: Cell division topological specificity factor (88 aa).

This sequence belongs to the MinE family.

Prevents the cell division inhibition by proteins MinC and MinD at internal division sites while permitting inhibition at polar sites. This ensures cell division at the proper site by restricting the formation of a division septum at the midpoint of the long axis of the cell. This is Cell division topological specificity factor from Paracidovorax citrulli (strain AAC00-1) (Acidovorax citrulli).